Consider the following 290-residue polypeptide: Urease accessory protein UreD (290 aa).

It belongs to the UreD family. As to quaternary structure, ureD, UreF and UreG form a complex that acts as a GTP-hydrolysis-dependent molecular chaperone, activating the urease apoprotein by helping to assemble the nickel containing metallocenter of UreC. The UreE protein probably delivers the nickel.

Its subcellular location is the cytoplasm. In terms of biological role, required for maturation of urease via the functional incorporation of the urease nickel metallocenter. This chain is Urease accessory protein UreD, found in Paenarthrobacter aurescens (strain TC1).